The sequence spans 966 residues: Aminopeptidase N (966 aa).

Residues 1 to 8 (MAKGFYIS) are Cytoplasmic-facing. A helical; Signal-anchor for type II membrane protein transmembrane segment spans residues 9 to 32 (KSLGILGILLGVAALCTIVALSVV). The interval 33–65 (YRQEKNKNTSQSPSMAPLNPTATSSPATTLDQN) is cytosolic Ser/Thr-rich junction. At 33 to 966 (YRQEKNKNTS…VLAWFTANSA (934 aa)) the chain is on the extracellular side. N-linked (GlcNAc...) asparagine glycans are attached at residues Asn-40 and Asn-125. Residues 40-61 (NTSQSPSMAPLNPTATSSPATT) are disordered. Positions 66–966 (LPWNRYRLPK…VLAWFTANSA (901 aa)) are metalloprotease. Sulfotyrosine is present on Tyr-173. Asn-259 and Asn-315 each carry an N-linked (GlcNAc...) asparagine glycan. Residue 348–352 (GAMEN) coordinates substrate. His-384 lines the Zn(2+) pocket. The active-site Proton acceptor is Glu-385. Residues His-388 and Glu-407 each contribute to the Zn(2+) site. Sulfotyrosine is present on residues Tyr-415 and Tyr-420. 4 N-linked (GlcNAc...) asparagine glycosylation sites follow: Asn-552, Asn-570, Asn-624, and Asn-734. 2 disulfides stabilise this stretch: Cys-760–Cys-767 and Cys-797–Cys-833. Asn-817 is a glycosylation site (N-linked (GlcNAc...) asparagine). Tyr-852 is modified (phosphotyrosine). A Sulfotyrosine modification is found at Tyr-912.

It belongs to the peptidase M1 family. In terms of assembly, homodimer. Interacts with SLC6A19. Zn(2+) is required as a cofactor. In terms of processing, sulfated. N- and O-glycosylated. Post-translationally, may undergo proteolysis and give rise to a soluble form.

Its subcellular location is the cell membrane. It catalyses the reaction Release of an N-terminal amino acid, Xaa-|-Yaa- from a peptide, amide or arylamide. Xaa is preferably Ala, but may be most amino acids including Pro (slow action). When a terminal hydrophobic residue is followed by a prolyl residue, the two may be released as an intact Xaa-Pro dipeptide.. Broad specificity aminopeptidase which plays a role in the final digestion of peptides generated from hydrolysis of proteins by gastric and pancreatic proteases. Also involved in the processing of various peptides including peptide hormones, such as angiotensin III and IV, neuropeptides, and chemokines. May also be involved the cleavage of peptides bound to major histocompatibility complex class II molecules of antigen presenting cells. May have a role in angiogenesis and promote cholesterol crystallization. May have a role in amino acid transport by acting as binding partner of amino acid transporter SLC6A19 and regulating its activity. In Oryctolagus cuniculus (Rabbit), this protein is Aminopeptidase N (ANPEP).